We begin with the raw amino-acid sequence, 639 residues long: Testicular spindle-associated protein SHCBP1L (639 aa).

Disordered stretches follow at residues 1–25 (MESD…EQTV) and 48–75 (VASP…ETCD). An O-acetylserine modification is found at S3. S8, S19, and S50 each carry phosphoserine. The segment covering 54-63 (VKGKAARRRL) has biased composition (basic residues). Residues 285–312 (IAQRFKKTLEKYKNKRVELIEYQSNIKE) adopt a coiled-coil conformation. 4 PbH1 repeats span residues 479 to 500 (SGHL…CVLT), 501 to 523 (GASL…ELYP), 524 to 557 (GSIA…NMKV), and 560 to 582 (APKL…SILQ). K556 bears the N6-acetyllysine mark. Position 631 is an N6-acetyllysine (K631).

As to quaternary structure, interacts with HSPA2; this interaction may promote the recruitment of HSPA2 to the spindle. As to expression, expressed in pachytene spermatocytes and elongating spermatids inside the seminiferous tubules. Not detected in ovary (at protein level). Testis-specific.

The protein localises to the cytoplasm. It localises to the cytoskeleton. The protein resides in the spindle. In terms of biological role, testis-specific spindle-associated factor that plays a role in spermatogenesis. In association with HSPA2, participates in the maintenance of spindle integrity during meiosis in male germ cells. The sequence is that of Testicular spindle-associated protein SHCBP1L from Mus musculus (Mouse).